A 128-amino-acid polypeptide reads, in one-letter code: Cytochrome c-type biogenesis protein CcmE (128 aa).

Topologically, residues 1–7 are cytoplasmic; the sequence is MKKKHKR. A helical; Signal-anchor for type II membrane protein membrane pass occupies residues 8-28; the sequence is LLVASGIFFFLNCIVFFILTI. Over 29–128 the chain is Extracellular; sequence LRENISFFYT…KHDENYMPRK (100 aa). Residues histidine 120 and tyrosine 124 each contribute to the heme site.

Belongs to the CcmE/CycJ family.

The protein localises to the cell membrane. In terms of biological role, heme chaperone required for the biogenesis of c-type cytochromes. Transiently binds heme delivered by CcmC and transfers the heme to apo-cytochromes in a process facilitated by CcmF and CcmH. This is Cytochrome c-type biogenesis protein CcmE from Wolbachia sp. subsp. Brugia malayi (strain TRS).